A 266-amino-acid chain; its full sequence is Interleukin-1 beta (266 aa).

The propeptide occupies 1–113 (MATVPEPTNE…ETYDDDLLCD (113 aa)).

It belongs to the IL-1 family. Monomer. In its precursor form, weakly interacts with full-length MEFV; the mature cytokine does not interact at all. Interacts with integrins ITGAV:ITGBV and ITGA5:ITGB1; integrin-binding is required for IL1B signaling. Interacts with cargo receptor TMED10; the interaction is direct and is required for the secretion of IL1B mature form. Interacts with HSP90AB1; the interaction facilitates cargo translocation into the ERGIC. Interacts with HSP90B1; the interaction facilitates cargo translocation into the ERGIC.

It is found in the cytoplasm. It localises to the cytosol. The protein localises to the secreted. Its subcellular location is the lysosome. The protein resides in the extracellular exosome. Functionally, potent pro-inflammatory cytokine. Initially discovered as the major endogenous pyrogen, induces prostaglandin synthesis, neutrophil influx and activation, T-cell activation and cytokine production, B-cell activation and antibody production, and fibroblast proliferation and collagen production. Promotes Th17 differentiation of T-cells. Synergizes with IL12/interleukin-12 to induce IFNG synthesis from T-helper 1 (Th1) cells. Plays a role in angiogenesis by inducing VEGF production synergistically with TNF and IL6. Involved in transduction of inflammation downstream of pyroptosis: its mature form is specifically released in the extracellular milieu by passing through the gasdermin-D (GSDMD) pore. This is Interleukin-1 beta (IL1B) from Delphinapterus leucas (Beluga whale).